The chain runs to 213 residues: Ribonuclease Oy (213 aa).

His-35 is a catalytic residue. A disulfide bridge links Cys-51 with Cys-96. Asn-52 carries an N-linked (GlcNAc...) asparagine glycan. Catalysis depends on residues Glu-89 and His-93. Residues Asn-121 and Asn-142 are each glycosylated (N-linked (GlcNAc...) asparagine). Intrachain disulfides connect Cys-160/Cys-198 and Cys-178/Cys-188.

The protein belongs to the RNase T2 family.

Its subcellular location is the secreted. Functionally, releases mononucleotides from RNA in the order of 3'-GMP, 3'-AMP and 3'-UMP. This chain is Ribonuclease Oy, found in Magallana gigas (Pacific oyster).